The primary structure comprises 484 residues: uncharacterized protein (484 aa).

The helical transmembrane segment at 25 to 45 (PLSLFVVLAAVPLPIYFSGLL) threads the bilayer. In terms of domain architecture, EF-hand spans 384-419 (LSFEETKELWVRADLDGNGVFDYEELKKIWNMTMVN). Ca(2+)-binding residues include D397, D399, N401, and E408.

It localises to the membrane. This is an uncharacterized protein from Arabidopsis thaliana (Mouse-ear cress).